Reading from the N-terminus, the 61-residue chain is Small ribosomal subunit protein uS14B (61 aa).

Zn(2+)-binding residues include Cys-24, Cys-27, Cys-40, and Cys-43.

It belongs to the universal ribosomal protein uS14 family. Zinc-binding uS14 subfamily. As to quaternary structure, part of the 30S ribosomal subunit. Contacts proteins S3 and S10. Requires Zn(2+) as cofactor.

Binds 16S rRNA, required for the assembly of 30S particles and may also be responsible for determining the conformation of the 16S rRNA at the A site. The chain is Small ribosomal subunit protein uS14B from Bacillus licheniformis (strain ATCC 14580 / DSM 13 / JCM 2505 / CCUG 7422 / NBRC 12200 / NCIMB 9375 / NCTC 10341 / NRRL NRS-1264 / Gibson 46).